Reading from the N-terminus, the 330-residue chain is Ketol-acid reductoisomerase (NADP(+)) (330 aa).

The KARI N-terminal Rossmann domain maps to 3–184 (LPVYYDKDID…GGGRMGVLKT (182 aa)). Residues 26–29 (YGAQ), S52, and S54 each bind NADP(+). H109 is an active-site residue. Position 135 (G135) interacts with NADP(+). One can recognise a KARI C-terminal knotted domain in the interval 185 to 329 (SFKEECESDL…EILRAPFNHK (145 aa)). 4 residues coordinate Mg(2+): D193, E197, E229, and E233. Residue S254 participates in substrate binding.

Belongs to the ketol-acid reductoisomerase family. Mg(2+) is required as a cofactor.

It carries out the reaction (2R)-2,3-dihydroxy-3-methylbutanoate + NADP(+) = (2S)-2-acetolactate + NADPH + H(+). The enzyme catalyses (2R,3R)-2,3-dihydroxy-3-methylpentanoate + NADP(+) = (S)-2-ethyl-2-hydroxy-3-oxobutanoate + NADPH + H(+). It participates in amino-acid biosynthesis; L-isoleucine biosynthesis; L-isoleucine from 2-oxobutanoate: step 2/4. The protein operates within amino-acid biosynthesis; L-valine biosynthesis; L-valine from pyruvate: step 2/4. In terms of biological role, involved in the biosynthesis of branched-chain amino acids (BCAA). Catalyzes an alkyl-migration followed by a ketol-acid reduction of (S)-2-acetolactate (S2AL) to yield (R)-2,3-dihydroxy-isovalerate. In the isomerase reaction, S2AL is rearranged via a Mg-dependent methyl migration to produce 3-hydroxy-3-methyl-2-ketobutyrate (HMKB). In the reductase reaction, this 2-ketoacid undergoes a metal-dependent reduction by NADPH to yield (R)-2,3-dihydroxy-isovalerate. This Helicobacter pylori (strain HPAG1) protein is Ketol-acid reductoisomerase (NADP(+)).